The following is a 250-amino-acid chain: Methionine aminopeptidase (250 aa).

Residue histidine 77 participates in substrate binding. Residues aspartate 95, aspartate 106, and histidine 169 each coordinate a divalent metal cation. Histidine 176 lines the substrate pocket. 2 residues coordinate a divalent metal cation: glutamate 202 and glutamate 233.

It belongs to the peptidase M24A family. Methionine aminopeptidase type 1 subfamily. Monomer. Co(2+) is required as a cofactor. Zn(2+) serves as cofactor. It depends on Mn(2+) as a cofactor. Requires Fe(2+) as cofactor.

The enzyme catalyses Release of N-terminal amino acids, preferentially methionine, from peptides and arylamides.. Its function is as follows. Removes the N-terminal methionine from nascent proteins. The N-terminal methionine is often cleaved when the second residue in the primary sequence is small and uncharged (Met-Ala-, Cys, Gly, Pro, Ser, Thr, or Val). Requires deformylation of the N(alpha)-formylated initiator methionine before it can be hydrolyzed. The protein is Methionine aminopeptidase of Clostridium acetobutylicum (strain ATCC 824 / DSM 792 / JCM 1419 / IAM 19013 / LMG 5710 / NBRC 13948 / NRRL B-527 / VKM B-1787 / 2291 / W).